We begin with the raw amino-acid sequence, 251 residues long: Pyridoxine 5'-phosphate synthase (251 aa).

Asparagine 7 lines the 3-amino-2-oxopropyl phosphate pocket. Residue 9 to 10 (DH) coordinates 1-deoxy-D-xylulose 5-phosphate. Arginine 18 is a 3-amino-2-oxopropyl phosphate binding site. Histidine 43 serves as the catalytic Proton acceptor. 1-deoxy-D-xylulose 5-phosphate-binding residues include arginine 45 and histidine 50. Residue glutamate 70 is the Proton acceptor of the active site. Position 100 (threonine 100) interacts with 1-deoxy-D-xylulose 5-phosphate. Catalysis depends on histidine 198, which acts as the Proton donor. 3-amino-2-oxopropyl phosphate-binding positions include alanine 199 and 220–221 (GH).

Belongs to the PNP synthase family. As to quaternary structure, homooctamer; tetramer of dimers.

It is found in the cytoplasm. It carries out the reaction 3-amino-2-oxopropyl phosphate + 1-deoxy-D-xylulose 5-phosphate = pyridoxine 5'-phosphate + phosphate + 2 H2O + H(+). It functions in the pathway cofactor biosynthesis; pyridoxine 5'-phosphate biosynthesis; pyridoxine 5'-phosphate from D-erythrose 4-phosphate: step 5/5. Functionally, catalyzes the complicated ring closure reaction between the two acyclic compounds 1-deoxy-D-xylulose-5-phosphate (DXP) and 3-amino-2-oxopropyl phosphate (1-amino-acetone-3-phosphate or AAP) to form pyridoxine 5'-phosphate (PNP) and inorganic phosphate. This Dechloromonas aromatica (strain RCB) protein is Pyridoxine 5'-phosphate synthase.